Reading from the N-terminus, the 367-residue chain is Aspartate beta-hydroxylase domain-containing protein 1 (367 aa).

Positions 1-27 (MWRGSSAGGSQGAAMEGTGGELGGQGN) are disordered. Over 1 to 49 (MWRGSSAGGSQGAAMEGTGGELGGQGNWGLEDAPGLLARASLPIMPAWP) the chain is Cytoplasmic. The helical transmembrane segment at 50-72 (LPLASSALTLLLGALTSLFLWYC) threads the bilayer. Over 73 to 367 (YRLGSQDMQA…ALDFVFAPDP (295 aa)) the chain is Lumenal. Residues 88–122 (RAGAVGGRPGGCSEAGRPSPGRSGESGEGPRTEGL) are disordered. At S106 the chain carries Phosphoserine.

It belongs to the aspartyl/asparaginyl beta-hydroxylase family.

The protein resides in the membrane. This Bos taurus (Bovine) protein is Aspartate beta-hydroxylase domain-containing protein 1 (ASPHD1).